The primary structure comprises 377 residues: MTSHVMPTAERKVRVDLAERSYDILIGPGLIAAAGKEIASRLKGRKMAVITDENVAPRYLEPLMASLGESGIEAVSLILPAGEKTKSFEHLIPVCEAILGARIERNDAVIALGGGVIGDLTGFAAGIVRRGSRFIQIPTSLLAQVDSSVGGKTGINSAHGKNLIGVFHQPDLVLADTAALDTLSPREFRAGYAEVAKYGLIDKPEFFEWLEKNWQAVFAGGPARIEAIAVSCQAKADVVAADERENGRRALLNLGHTFGHALEAATDYDSKRLVHGEGVAIGMVLAHEFSARMNLASPDDARRVEAHLKTVGLPTRLADIPGALPPADRLMEAIAQDKKVKGGKLTFILTRGIGQSFVADDVPSSEVLSFLTEKHPR.

NAD(+) is bound by residues 115–119 (GVIGD), 139–140 (TS), lysine 152, and lysine 161. 3 residues coordinate Zn(2+): glutamate 194, histidine 256, and histidine 275.

The protein belongs to the sugar phosphate cyclases superfamily. Dehydroquinate synthase family. It depends on NAD(+) as a cofactor. Co(2+) is required as a cofactor. Requires Zn(2+) as cofactor.

Its subcellular location is the cytoplasm. The catalysed reaction is 7-phospho-2-dehydro-3-deoxy-D-arabino-heptonate = 3-dehydroquinate + phosphate. It functions in the pathway metabolic intermediate biosynthesis; chorismate biosynthesis; chorismate from D-erythrose 4-phosphate and phosphoenolpyruvate: step 2/7. Its function is as follows. Catalyzes the conversion of 3-deoxy-D-arabino-heptulosonate 7-phosphate (DAHP) to dehydroquinate (DHQ). The polypeptide is 3-dehydroquinate synthase (Rhizobium meliloti (strain 1021) (Ensifer meliloti)).